A 105-amino-acid polypeptide reads, in one-letter code: MIASKFGIGQQVRHRLHGYLGVVIDIDPEYSLEPPAPDEVANNDTLRLSPWYHVVIEDDEGQPVHTYLAEAQLTYEDMDAHPEQPSLDELAASIRHQLQAPRLRN.

The protein belongs to the HspQ family.

It is found in the cytoplasm. In terms of biological role, involved in the degradation of certain denaturated proteins, including DnaA, during heat shock stress. This chain is Heat shock protein HspQ, found in Yersinia enterocolitica serotype O:8 / biotype 1B (strain NCTC 13174 / 8081).